The sequence spans 220 residues: 7-cyano-7-deazaguanine synthase (220 aa).

11 to 21 contacts ATP; it reads VSGGMDSVTLM. Residues cysteine 186, cysteine 194, cysteine 197, and cysteine 200 each contribute to the Zn(2+) site.

Belongs to the QueC family. Requires Zn(2+) as cofactor.

It carries out the reaction 7-carboxy-7-deazaguanine + NH4(+) + ATP = 7-cyano-7-deazaguanine + ADP + phosphate + H2O + H(+). Its pathway is purine metabolism; 7-cyano-7-deazaguanine biosynthesis. Functionally, catalyzes the ATP-dependent conversion of 7-carboxy-7-deazaguanine (CDG) to 7-cyano-7-deazaguanine (preQ(0)). This chain is 7-cyano-7-deazaguanine synthase, found in Porphyromonas gingivalis (strain ATCC 33277 / DSM 20709 / CIP 103683 / JCM 12257 / NCTC 11834 / 2561).